The primary structure comprises 932 residues: MADYKDSLNLPDTAFPMRGDLPKREPQWVAQWQEKKLYQRIREICAGRPRFTLHDGPPYANGDIHIGHAVNKVLKDIIVRSKTLSGFDAPYVPGWDCHGLPIEHQIEKLHGKAIPADKVRELSRAYAAEQVERQKKDFIRLGVLGDWGNPYLTMNFSAEAGEIRALGKILEQGYLYQGLKPVNWCLDCGSALAEAEVEYEDKNSPAIDVAFEVHENHTAKLAAAFGLTHLRGPAFAVIWTTTPWTLPANEAVSVHPDLTYDLIETEKGALILVRELAEAALKRYGLEGTVAGSCTGDKLDQMLLKHPFQNRDVAIICGTHVTTEAGTGLVHTAPAHGVDDYNIGKKYGLPVNNPVGNDGKFISTTPALSVGELAGKTVWEANPQVLQELEARARLLKNERIQHSYPHCWRHKTPIIFRATTQWFIGMENKKNEDASTLRWIAERAVDETQFFPAWGRARLEGMMKTRPDWCVSRQRNWGVPIPFFLHKETGQPHPRTAELIEQVALRVEKSGIEAWFSLDAAELLGAEADQYVKMKDTLDVWFDSGTTHWHVMRGSHAADHTYPADLYLEGSDQHRGWFQSSLLSGCAIDGRAPYKGLLTHGFVVDGKGHKMSKSKGNVIAPQQVSDKMGADILRLWTASTDYSGELTISDEILKRVVEGYRRIRNTLRFLLANVSDFDAATDMLPIDQWLEIDRYALALTRELQDGCRADFDKYEFHRVVQALQTFCSEDLGGFYLDILKDRLYTTAPKSVARRSAQSALWHITQAFVRLLAPITAFTAEEVWQVLTGKADDSVMFQVWHDLPALAGEGDLLAKWALIRTARADVTKALEAQREAGKIGSALQAAVEIHCGGEKYEALASLGDDLKFVFICSSTVAVRDDNEQVIATPLEHAKCERCWHVREDVGANTEHPTLCGRCVSNLYGEGEVRGCA.

The 'HIGH' region motif lies at 58 to 68; that stretch reads PYANGDIHIGH. Position 570 (glutamate 570) interacts with L-isoleucyl-5'-AMP. The 'KMSKS' region signature appears at 611-615; sequence KMSKS. Lysine 614 contributes to the ATP binding site. The Zn(2+) site is built by cysteine 895, cysteine 898, cysteine 915, and cysteine 918.

This sequence belongs to the class-I aminoacyl-tRNA synthetase family. IleS type 1 subfamily. Monomer. The cofactor is Zn(2+).

The protein localises to the cytoplasm. The enzyme catalyses tRNA(Ile) + L-isoleucine + ATP = L-isoleucyl-tRNA(Ile) + AMP + diphosphate. Catalyzes the attachment of isoleucine to tRNA(Ile). As IleRS can inadvertently accommodate and process structurally similar amino acids such as valine, to avoid such errors it has two additional distinct tRNA(Ile)-dependent editing activities. One activity is designated as 'pretransfer' editing and involves the hydrolysis of activated Val-AMP. The other activity is designated 'posttransfer' editing and involves deacylation of mischarged Val-tRNA(Ile). The protein is Isoleucine--tRNA ligase of Dechloromonas aromatica (strain RCB).